A 299-amino-acid polypeptide reads, in one-letter code: MREFGNPLGDRPPLDELARTDLLLDALAEREEVDFADPRDDALAALLGQWRDDLRWPPASALVSQDEAVAALRAGVAQRRRARRSLAAVGSVAAALLVLSGFGAVVADARPGDLLYGLHAMMFNRSRVSDDQIVLSAKANLAKVEQMIAQGQWAEAQDELAEVSSTVQAVTDGSRRQDLINEVNLLNTKVETRDPNATLRPGSPSNPAAPGSVGNSWTPLAPVVEPPTPPTPASAAEPSMSAGVSESPMPNSTSTVAASPSTPSSKPEPGSIDPSLEPADEATNPAGQPAPETPVSPTH.

A helical membrane pass occupies residues 86–106 (LAAVGSVAAALLVLSGFGAVV). Residues 187 to 299 (NTKVETRDPN…APETPVSPTH (113 aa)) form a disordered region. 2 stretches are compositionally biased toward low complexity: residues 201–212 (PGSPSNPAAPGS) and 250–271 (PNSTSTVAASPSTPSSKPEPGS).

As to quaternary structure, interacts with ECF RNA polymerase sigma factor SigD; this should inhibit the interaction of SigD with the RNA polymerase catalytic core. Post-translationally, the cytosolic fragment is degraded by a ClpP1-ClpP2-ClpX complex, as would be expected after S1P and S2P intramembrane proteolysis. This releases SigD so that it may bind to the RNA polymerase catalytic core.

The protein resides in the cell membrane. Functionally, an anti-sigma factor for extracytoplasmic function (ECF) sigma factor SigD. ECF sigma factors are held in an inactive form by an anti-sigma factor until released by regulated intramembrane proteolysis (RIP). RIP occurs when an extracytoplasmic signal triggers a concerted proteolytic cascade to transmit information and elicit cellular responses. The membrane-spanning regulatory substrate protein is first cut extracytoplasmically (site-1 protease, S1P), then within the membrane itself (site-2 protease, S2P), while cytoplasmic proteases finish degrading the regulatory protein, liberating the sigma factor. Neither S1P nor S2P proteases have been so far identified for this anti-sigma factor. This is Anti-sigma-D factor RsdA (rsda) from Mycobacterium bovis (strain ATCC BAA-935 / AF2122/97).